The primary structure comprises 290 residues: Urease accessory protein UreD (290 aa).

This sequence belongs to the UreD family. As to quaternary structure, ureD, UreF and UreG form a complex that acts as a GTP-hydrolysis-dependent molecular chaperone, activating the urease apoprotein by helping to assemble the nickel containing metallocenter of UreC. The UreE protein probably delivers the nickel.

It localises to the cytoplasm. Functionally, required for maturation of urease via the functional incorporation of the urease nickel metallocenter. This is Urease accessory protein UreD from Paenarthrobacter aurescens (strain TC1).